The primary structure comprises 403 residues: F-box protein At2g40925 (403 aa).

Positions 21 to 71 constitute an F-box domain; that stretch reads NRHDCEIPPDLMIEILIRLPTKSFMRFKCVSKQWSPLISGRYFCNRLFTCV.

This chain is F-box protein At2g40925, found in Arabidopsis thaliana (Mouse-ear cress).